The primary structure comprises 442 residues: 3-phosphoshikimate 1-carboxyvinyltransferase (442 aa).

3-phosphoshikimate contacts are provided by K23, S24, and R28. Residue K23 coordinates phosphoenolpyruvate. Phosphoenolpyruvate contacts are provided by G95 and R123. 3-phosphoshikimate-binding residues include S167, Q169, D315, and K342. Q169 is a phosphoenolpyruvate binding site. Catalysis depends on D315, which acts as the Proton acceptor. Phosphoenolpyruvate-binding residues include R346 and R390.

The protein belongs to the EPSP synthase family. Monomer.

It is found in the cytoplasm. It catalyses the reaction 3-phosphoshikimate + phosphoenolpyruvate = 5-O-(1-carboxyvinyl)-3-phosphoshikimate + phosphate. It functions in the pathway metabolic intermediate biosynthesis; chorismate biosynthesis; chorismate from D-erythrose 4-phosphate and phosphoenolpyruvate: step 6/7. Catalyzes the transfer of the enolpyruvyl moiety of phosphoenolpyruvate (PEP) to the 5-hydroxyl of shikimate-3-phosphate (S3P) to produce enolpyruvyl shikimate-3-phosphate and inorganic phosphate. This chain is 3-phosphoshikimate 1-carboxyvinyltransferase, found in Dichelobacter nodosus (strain VCS1703A).